Reading from the N-terminus, the 162-residue chain is NADH-quinone oxidoreductase subunit I (162 aa).

2 4Fe-4S ferredoxin-type domains span residues 53 to 83 (LRRY…IESE) and 93 to 122 (TRYD…ETRV). C63, C66, C69, C73, C102, C105, C108, and C112 together coordinate [4Fe-4S] cluster.

The protein belongs to the complex I 23 kDa subunit family. NDH-1 is composed of 14 different subunits. Subunits NuoA, H, J, K, L, M, N constitute the membrane sector of the complex. The cofactor is [4Fe-4S] cluster.

It localises to the cell inner membrane. It carries out the reaction a quinone + NADH + 5 H(+)(in) = a quinol + NAD(+) + 4 H(+)(out). Its function is as follows. NDH-1 shuttles electrons from NADH, via FMN and iron-sulfur (Fe-S) centers, to quinones in the respiratory chain. The immediate electron acceptor for the enzyme in this species is believed to be ubiquinone. Couples the redox reaction to proton translocation (for every two electrons transferred, four hydrogen ions are translocated across the cytoplasmic membrane), and thus conserves the redox energy in a proton gradient. The sequence is that of NADH-quinone oxidoreductase subunit I from Nitrosomonas eutropha (strain DSM 101675 / C91 / Nm57).